A 242-amino-acid polypeptide reads, in one-letter code: Small ribosomal subunit protein uS2 (242 aa).

The protein belongs to the universal ribosomal protein uS2 family.

In Shewanella halifaxensis (strain HAW-EB4), this protein is Small ribosomal subunit protein uS2.